The sequence spans 93 residues: UPF0223 protein SAG0995 (93 aa).

This sequence belongs to the UPF0223 family.

This chain is UPF0223 protein SAG0995, found in Streptococcus agalactiae serotype V (strain ATCC BAA-611 / 2603 V/R).